The following is a 499-amino-acid chain: Glycerol kinase (499 aa).

An ADP-binding site is contributed by T11. T11, S12, and S13 together coordinate ATP. A sn-glycerol 3-phosphate-binding site is contributed by T11. R15 lines the ADP pocket. R81, E82, Y133, and D242 together coordinate sn-glycerol 3-phosphate. R81, E82, Y133, D242, and Q243 together coordinate glycerol. Residues T264 and G309 each coordinate ADP. ATP contacts are provided by T264, G309, Q313, and G414. ADP contacts are provided by G414 and N418.

Belongs to the FGGY kinase family.

It catalyses the reaction glycerol + ATP = sn-glycerol 3-phosphate + ADP + H(+). It participates in polyol metabolism; glycerol degradation via glycerol kinase pathway; sn-glycerol 3-phosphate from glycerol: step 1/1. Inhibited by fructose 1,6-bisphosphate (FBP). Key enzyme in the regulation of glycerol uptake and metabolism. Catalyzes the phosphorylation of glycerol to yield sn-glycerol 3-phosphate. This chain is Glycerol kinase, found in Methylibium petroleiphilum (strain ATCC BAA-1232 / LMG 22953 / PM1).